We begin with the raw amino-acid sequence, 258 residues long: UPF0246 protein VV1_0535 (258 aa).

It belongs to the UPF0246 family.

This chain is UPF0246 protein VV1_0535, found in Vibrio vulnificus (strain CMCP6).